Reading from the N-terminus, the 428-residue chain is D-amino acid dehydrogenase (428 aa).

3 to 17 (VVILGSGVVGVASAY) provides a ligand contact to FAD.

This sequence belongs to the DadA oxidoreductase family. The cofactor is FAD.

It carries out the reaction a D-alpha-amino acid + A + H2O = a 2-oxocarboxylate + AH2 + NH4(+). It participates in amino-acid degradation; D-alanine degradation; NH(3) and pyruvate from D-alanine: step 1/1. Functionally, oxidative deamination of D-amino acids. The chain is D-amino acid dehydrogenase from Burkholderia thailandensis (strain ATCC 700388 / DSM 13276 / CCUG 48851 / CIP 106301 / E264).